The sequence spans 794 residues: 6-hydroxypseudooxynicotine dehydrogenase complex subunit gamma (794 aa).

As to quaternary structure, heterohexamer of 2 alpha (kdhA), 2 beta (kdhB) and 2 gamma (kdhC) subunit. Dimer of heterotrimers. Mo-molybdopterin cytosine dinucleotide is required as a cofactor.

It catalyses the reaction 6-hydroxypseudooxynicotine + A + H2O = 2,6-dihydroxypseudooxynicotine + AH2. The protein operates within alkaloid degradation; nicotine degradation. Molybdo-flavoprotein enzyme complex involved in nicotine degradation. The subunit gamma (large subunit) contains the substrate-binding sites, the subunit alpha (medium subunit) binds FAD and the subunit beta (small subunit) has a 2Fe-2S ferredoxin-type domain which binds 2 2Fe-2S clusters. The polypeptide is 6-hydroxypseudooxynicotine dehydrogenase complex subunit gamma (kdhC) (Paenarthrobacter nicotinovorans (Arthrobacter nicotinovorans)).